A 315-amino-acid polypeptide reads, in one-letter code: MSHSKVAVIGSGNIGTDLVVKLKKLATNVEIAVLVGIDPSSDGLARARRMGIGTVDTGVQGLIEHAEFDEIDIIFDSTSAKAHLVNEEALRTFGKRLIDLTPAAVGPYVVPAVNLDDHLGAPNVNMVTCGGQATIPIVAAISSVTAVHYAEIVASIASKSAGPGTRSNIDEFTQTTSAAIEKVGGAAHGKAIIVLNPAEPPLIMRDTVLALVTDPDQNRIRQSVIDMVEKVSAYVPGYRLKQEVQFTQLDDAESVATLTGGVDKGPGLWKVAVFLEVEGAAHYLPAYAGNLDIMTSAALQVAERIAANTVQEATR.

An NAD(+)-binding site is contributed by serine 11 to isoleucine 14. Cysteine 129 functions as the Acyl-thioester intermediate in the catalytic mechanism. NAD(+) is bound by residues serine 160 to asparagine 168 and asparagine 290.

This sequence belongs to the acetaldehyde dehydrogenase family.

The enzyme catalyses acetaldehyde + NAD(+) + CoA = acetyl-CoA + NADH + H(+). This Mycobacterium sp. (strain KMS) protein is Acetaldehyde dehydrogenase 2.